The sequence spans 166 residues: Outer membrane protein assembly factor BamE (166 aa).

Residues 1–18 (MKRTVFPLAVAAALTLTA) form the signal peptide. A lipid anchor (N-palmitoyl cysteine) is attached at cysteine 19. Cysteine 19 is lipidated: S-diacylglycerol cysteine. The disordered stretch occupies residues 143 to 166 (LFSNDDSGEMPVKPESKPSDLLNE).

It belongs to the BamE family. Part of the Bam complex.

It is found in the cell outer membrane. Part of the outer membrane protein assembly complex, which is involved in assembly and insertion of beta-barrel proteins into the outer membrane. The sequence is that of Outer membrane protein assembly factor BamE from Methylomonas methanica (strain DSM 25384 / MC09).